A 255-amino-acid polypeptide reads, in one-letter code: Taurine import ATP-binding protein TauB (255 aa).

Residues 2-229 form the ABC transporter domain; that stretch reads LQISHLYADY…RFVAGESSRS (228 aa). 34-41 is an ATP binding site; sequence GPSGCGKT.

Belongs to the ABC transporter superfamily. Taurine importer (TC 3.A.1.17.1) family. The complex is composed of two ATP-binding proteins (TauB), two transmembrane proteins (TauC) and a solute-binding protein (TauA).

The protein localises to the cell inner membrane. The catalysed reaction is taurine(out) + ATP + H2O = taurine(in) + ADP + phosphate + H(+). Part of the ABC transporter complex TauABC involved in taurine import. Responsible for energy coupling to the transport system. The chain is Taurine import ATP-binding protein TauB from Shigella flexneri serotype 5b (strain 8401).